The following is a 137-amino-acid chain: uncharacterized protein (137 aa).

The signal sequence occupies residues 1-21 (MFNRRVLFLSVFSCAVFMLSG). Residue Cys-22 is the site of N-palmitoyl cysteine attachment. The S-diacylglycerol cysteine moiety is linked to residue Cys-22.

The protein resides in the membrane. This is an uncharacterized protein from Escherichia coli (strain K12).